Consider the following 344-residue polypeptide: tRNA N6-adenosine threonylcarbamoyltransferase (344 aa).

Positions 112 and 116 each coordinate Fe cation. Substrate is bound by residues 134–138 (LASGG), aspartate 167, glycine 180, and asparagine 280. Position 308 (aspartate 308) interacts with Fe cation.

The protein belongs to the KAE1 / TsaD family. It depends on Fe(2+) as a cofactor.

Its subcellular location is the cytoplasm. It catalyses the reaction L-threonylcarbamoyladenylate + adenosine(37) in tRNA = N(6)-L-threonylcarbamoyladenosine(37) in tRNA + AMP + H(+). Required for the formation of a threonylcarbamoyl group on adenosine at position 37 (t(6)A37) in tRNAs that read codons beginning with adenine. Is involved in the transfer of the threonylcarbamoyl moiety of threonylcarbamoyl-AMP (TC-AMP) to the N6 group of A37, together with TsaE and TsaB. TsaD likely plays a direct catalytic role in this reaction. The chain is tRNA N6-adenosine threonylcarbamoyltransferase from Rickettsia rickettsii (strain Iowa).